The chain runs to 215 residues: UPF0502 protein YceH (215 aa).

Belongs to the UPF0502 family.

This chain is UPF0502 protein YceH, found in Salmonella paratyphi A (strain ATCC 9150 / SARB42).